The following is a 920-amino-acid chain: 2-oxoadipate dehydrogenase complex component E1 (920 aa).

K183 and K188 each carry N6-succinyllysine. A disordered region spans residues 299-318 (GKTRGRQQSQEDGDYSPNGS). K800 and K818 each carry N6-succinyllysine.

This sequence belongs to the alpha-ketoglutarate dehydrogenase family. As to quaternary structure, the 2-oxoadipate dehydrogenase complex is composed of OADH (2-oxoadipate dehydrogenase; E1a), DLST (dihydrolipoamide succinyltransferase; E2) and DLD (dihydrolipoamide dehydrogenase; E3). E1a functional unit is a dimer. It depends on thiamine diphosphate as a cofactor.

It localises to the mitochondrion. The enzyme catalyses N(6)-[(R)-lipoyl]-L-lysyl-[protein] + 2-oxoadipate + H(+) = N(6)-[(R)-S(8)-glutaryldihydrolipoyl]-L-lysyl-[protein] + CO2. It participates in amino-acid degradation. 2-oxoadipate dehydrogenase (E1a) component of the 2-oxoadipate dehydrogenase complex (OADHC). Participates in the first step, rate limiting for the overall conversion of 2-oxoadipate (alpha-ketoadipate) to glutaryl-CoA and CO(2) catalyzed by the whole OADHC. Catalyzes the irreversible decarboxylation of 2-oxoadipate via the thiamine diphosphate (ThDP) cofactor and subsequent transfer of the decarboxylated acyl intermediate on an oxidized dihydrolipoyl group that is covalently amidated to the E2 enzyme (dihydrolipoyllysine-residue succinyltransferase or DLST). Can catalyze the decarboxylation of 2-oxoglutarate in vitro, but at a much lower rate than 2-oxoadipate. Responsible for the last step of L-lysine, L-hydroxylysine and L-tryptophan catabolism with the common product being 2-oxoadipate. The sequence is that of 2-oxoadipate dehydrogenase complex component E1 (Dhtkd1) from Rattus norvegicus (Rat).